Here is a 442-residue protein sequence, read N- to C-terminus: 3-phosphoshikimate 1-carboxyvinyltransferase (442 aa).

Residues Lys25, Ser26, and Arg30 each coordinate 3-phosphoshikimate. Residue Lys25 participates in phosphoenolpyruvate binding. Residues Gly97 and Arg125 each contribute to the phosphoenolpyruvate site. Residues Ser170, Ser171, Gln172, Asp323, and Lys350 each contribute to the 3-phosphoshikimate site. Gln172 serves as a coordination point for phosphoenolpyruvate. The active-site Proton acceptor is the Asp323. Arg354 and Arg399 together coordinate phosphoenolpyruvate.

The protein belongs to the EPSP synthase family. As to quaternary structure, monomer.

The protein resides in the cytoplasm. It carries out the reaction 3-phosphoshikimate + phosphoenolpyruvate = 5-O-(1-carboxyvinyl)-3-phosphoshikimate + phosphate. It participates in metabolic intermediate biosynthesis; chorismate biosynthesis; chorismate from D-erythrose 4-phosphate and phosphoenolpyruvate: step 6/7. In terms of biological role, catalyzes the transfer of the enolpyruvyl moiety of phosphoenolpyruvate (PEP) to the 5-hydroxyl of shikimate-3-phosphate (S3P) to produce enolpyruvyl shikimate-3-phosphate and inorganic phosphate. The sequence is that of 3-phosphoshikimate 1-carboxyvinyltransferase from Bartonella tribocorum (strain CIP 105476 / IBS 506).